The following is a 742-amino-acid chain: Phosphatidylinositol 4-phosphate 5-kinase its3 (742 aa).

Disordered stretches follow at residues 1–21 and 82–228; these read MKIDSNGIVNPHSITNEIPSY and LFKE…PDIG. Low complexity-rich tracts occupy residues 90–105 and 129–142; these read PSNPTAHSPSSSSNDS and PSSNSSSSPQLQNL. Polar residues-rich tracts occupy residues 158–181 and 193–218; these read RSSSNPVTSSQQPPNDRSTLSSSQ and EKNSSNAEPSGSRSGDRGTNVSTSGS. In terms of domain architecture, PIPK spans 264 to 662; the sequence is GHENYVTAYN…RFYKFVESSI (399 aa). The interval 677–742 is disordered; that stretch reads QDGQRVNKQQ…RNVTTNTSSS (66 aa). A compositionally biased stretch (polar residues) spans 680–719; the sequence is QRVNKQQSVNAGNVRTNNKHGSLNNNTAPSSRNAKSTSAH.

In terms of assembly, interacts with opy1 (via domain PH 1); the interaction is direct but opy1 does not appear to regulate its3 localization or function. In terms of processing, phosphorylated by casein kinase I. Phosphorylation inactivates the enzyme.

The protein localises to the cell membrane. It carries out the reaction a 1,2-diacyl-sn-glycero-3-phospho-(1D-myo-inositol 4-phosphate) + ATP = a 1,2-diacyl-sn-glycero-3-phospho-(1D-myo-inositol-4,5-bisphosphate) + ADP + H(+). Catalyzes the phosphorylation of phosphatidylinositol 4-phosphate on the fifth hydroxyl of the myo-inositol ring, to form phosphatidylinositol 4,5-bisphosphate. Involved, together with the calcineurin ppb1, in cytokinesis. This is Phosphatidylinositol 4-phosphate 5-kinase its3 (its3) from Schizosaccharomyces pombe (strain 972 / ATCC 24843) (Fission yeast).